We begin with the raw amino-acid sequence, 60 residues long: Mastoparan-VT4 (60 aa).

The N-terminal stretch at 1–27 (MKNPILILFTAFIALLGFFGMSAEALA) is a signal peptide. AXPX repeat units lie at residues 27–30 (ADPK), 31–34 (ADPL), 35–38 (AGPN), and 41–44 (ADPE). A propeptide spanning residues 28–45 (DPKADPLAGPNPDADPEA) is cleaved from the precursor. The residue at position 59 (Leu-59) is a Leucine amide.

The protein belongs to the MCD family. Mastoparan subfamily. In terms of tissue distribution, expressed by the venom gland.

The protein resides in the secreted. The synthetic peptide shows antimicrobial activities against Gram-negative bacteria (but not against all strains tested), Gram-positive bacteria (not all strains tested) and the fungi C.albicans and C.parapsilosis. Exhibits little hemolytic activity against washed human erythrocytes. The protein is Mastoparan-VT4 of Vespa tropica (Greater banded hornet).